A 117-amino-acid polypeptide reads, in one-letter code: Nascent polypeptide-associated complex protein (117 aa).

The NAC-A/B domain maps to 9–77 (PKQLKQMQRA…ARECDLEAEV (69 aa)).

Belongs to the NAC-alpha family. As to quaternary structure, homodimer. Interacts with the ribosome. Binds ribosomal RNA.

In terms of biological role, contacts the emerging nascent chain on the ribosome. The sequence is that of Nascent polypeptide-associated complex protein from Methanothermobacter marburgensis (strain ATCC BAA-927 / DSM 2133 / JCM 14651 / NBRC 100331 / OCM 82 / Marburg) (Methanobacterium thermoautotrophicum).